The following is a 566-amino-acid chain: Mannitol 2-dehydrogenase (566 aa).

Residue 106-117 participates in NAD(+) binding; it reads IVHVGVGGFHRA.

The protein belongs to the mannitol dehydrogenase family. In terms of assembly, monomer.

It carries out the reaction D-mannitol + NAD(+) = D-fructose + NADH + H(+). Functionally, catalyzes the NAD(H)-dependent interconversion of D-fructose and D-mannitol in the mannitol metabolic pathway. This chain is Mannitol 2-dehydrogenase, found in Pyrenophora tritici-repentis (strain Pt-1C-BFP) (Wheat tan spot fungus).